Here is a 366-residue protein sequence, read N- to C-terminus: tRNA-specific 2-thiouridylase MnmA (366 aa).

ATP is bound by residues 6-13 and leucine 32; that span reads AMSGGVDS. The Nucleophile role is filled by cysteine 101. An intrachain disulfide couples cysteine 101 to cysteine 199. Glycine 125 is a binding site for ATP. The segment at 148-150 is interaction with tRNA; that stretch reads KDQ. Residue cysteine 199 is the Cysteine persulfide intermediate of the active site.

This sequence belongs to the MnmA/TRMU family.

It localises to the cytoplasm. It catalyses the reaction S-sulfanyl-L-cysteinyl-[protein] + uridine(34) in tRNA + AH2 + ATP = 2-thiouridine(34) in tRNA + L-cysteinyl-[protein] + A + AMP + diphosphate + H(+). Catalyzes the 2-thiolation of uridine at the wobble position (U34) of tRNA, leading to the formation of s(2)U34. This is tRNA-specific 2-thiouridylase MnmA from Leifsonia xyli subsp. xyli (strain CTCB07).